A 193-amino-acid polypeptide reads, in one-letter code: Ion-translocating oxidoreductase complex subunit A (193 aa).

6 helical membrane passes run 5 to 25 (ALLL…FLGL), 39 to 59 (LGMG…SWML), 62 to 82 (WLLA…LVIA), 102 to 122 (SLGI…VALL), 134 to 154 (VLFG…FAGL), and 172 to 192 (AAFI…GLVA).

This sequence belongs to the NqrDE/RnfAE family. As to quaternary structure, the complex is composed of six subunits: RnfA, RnfB, RnfC, RnfD, RnfE and RnfG.

The protein resides in the cell inner membrane. Part of a membrane-bound complex that couples electron transfer with translocation of ions across the membrane. The chain is Ion-translocating oxidoreductase complex subunit A from Aromatoleum aromaticum (strain DSM 19018 / LMG 30748 / EbN1) (Azoarcus sp. (strain EbN1)).